The following is a 72-amino-acid chain: Translation initiation factor IF-1 (72 aa).

The region spanning 1–72 is the S1-like domain; the sequence is MAKDDVIEIE…TKGRITYRFK (72 aa).

This sequence belongs to the IF-1 family. Component of the 30S ribosomal translation pre-initiation complex which assembles on the 30S ribosome in the order IF-2 and IF-3, IF-1 and N-formylmethionyl-tRNA(fMet); mRNA recruitment can occur at any time during PIC assembly.

The protein resides in the cytoplasm. One of the essential components for the initiation of protein synthesis. Stabilizes the binding of IF-2 and IF-3 on the 30S subunit to which N-formylmethionyl-tRNA(fMet) subsequently binds. Helps modulate mRNA selection, yielding the 30S pre-initiation complex (PIC). Upon addition of the 50S ribosomal subunit IF-1, IF-2 and IF-3 are released leaving the mature 70S translation initiation complex. In Latilactobacillus sakei subsp. sakei (strain 23K) (Lactobacillus sakei subsp. sakei), this protein is Translation initiation factor IF-1.